The sequence spans 159 residues: Urease accessory protein UreE (159 aa).

Belongs to the UreE family.

It localises to the cytoplasm. Its function is as follows. Involved in urease metallocenter assembly. Binds nickel. Probably functions as a nickel donor during metallocenter assembly. This is Urease accessory protein UreE from Vibrio parahaemolyticus.